Consider the following 777-residue polypeptide: Serine/threonine-protein kinase PTK2 (777 aa).

The disordered stretch occupies residues 21-174; that stretch reads NKLRGNNDST…ISSGSASSTN (154 aa). The span at 30–41 shows a compositional bias: low complexity; that stretch reads TPAAAPAPVPTK. Polar residues-rich tracts occupy residues 50–61 and 83–133; these read AHISRSASTNTP and RRST…SQHM. The span at 149–172 shows a compositional bias: low complexity; that stretch reads SSVRGSSYSRHGSGSHISSGSASS. Residues 222 to 529 enclose the Protein kinase domain; that stretch reads DKDNKTIGSG…MEDLFNDPWF (308 aa). ATP contacts are provided by residues 228-236 and Lys-252; that span reads IGSGGSSEV. The Proton acceptor role is filled by Asp-355. Disordered regions lie at residues 564-705 and 728-764; these read DAHP…EITE and SVSG…KKVV. 2 stretches are compositionally biased toward polar residues: residues 575-592 and 648-672; these read TDTN…AGTH and TNTT…TNEF. Residues 677–694 show a composition bias toward low complexity; that stretch reads NATTTDNDNVNTKATTAD. Residues 744 to 756 show a composition bias toward polar residues; the sequence is NRSIHSNATSTGT.

The protein belongs to the protein kinase superfamily. Ser/Thr protein kinase family.

The catalysed reaction is L-seryl-[protein] + ATP = O-phospho-L-seryl-[protein] + ADP + H(+). It carries out the reaction L-threonyl-[protein] + ATP = O-phospho-L-threonyl-[protein] + ADP + H(+). This is Serine/threonine-protein kinase PTK2 (PTK2) from Candida glabrata (strain ATCC 2001 / BCRC 20586 / JCM 3761 / NBRC 0622 / NRRL Y-65 / CBS 138) (Yeast).